Reading from the N-terminus, the 484-residue chain is MTTLMVQGTTSDAGKSTLVTALCRWLLRQGVAVVPFKPQNMALNSAVTADGGEIGRAQAVQAQACRLAPHTDMNPVLLKPNSDTGAQVIIHGRAVTSMNAVAYHDYKAIAMQAVLASHQRLSGEYPVVMVEGAGSPAEINLRAGDIANMGFAEAVDCPVILVADINRGGVFAHLVGTLELLSPTEQARVKGFVINRFRGDIALLQPGLDWLEQRTGKPVLGVLPYVTDLHLEAEDGIDVRQGAKDERVLKVIVPVLPRISNHTDFDPLRLHPQVDLQFIGPGQPIPPADLIILPGSKSVRGDLAQLRERGWDTAIARHLRYGGKLIGICGGLQMLGREVHDPLGLEGPAGSSPGLGLLDYATVLEAQKQLRNVAGALSLEQSPVAGYEIHAGVTQGPALQRPAVQLADGRSDGAISADGQILATYLHGLFEGSQSCAALLRWAGLADVQQIDYEALRERDIERLADLVEKHLDTAHLRKLCGVA.

Residues 248–435 (VLKVIVPVLP…LHGLFEGSQS (188 aa)) enclose the GATase cobBQ-type domain. Cys-329 acts as the Nucleophile in catalysis. Residue His-427 is part of the active site.

Belongs to the CobB/CobQ family. CobQ subfamily.

It participates in cofactor biosynthesis; adenosylcobalamin biosynthesis. Functionally, catalyzes amidations at positions B, D, E, and G on adenosylcobyrinic A,C-diamide. NH(2) groups are provided by glutamine, and one molecule of ATP is hydrogenolyzed for each amidation. This chain is Cobyric acid synthase, found in Pseudomonas putida (strain W619).